A 184-amino-acid chain; its full sequence is Peptide deformylase (184 aa).

2 residues coordinate Fe cation: C98 and H140. E141 is an active-site residue. A Fe cation-binding site is contributed by H144.

Belongs to the polypeptide deformylase family. The cofactor is Fe(2+).

It carries out the reaction N-terminal N-formyl-L-methionyl-[peptide] + H2O = N-terminal L-methionyl-[peptide] + formate. Its function is as follows. Removes the formyl group from the N-terminal Met of newly synthesized proteins. Requires at least a dipeptide for an efficient rate of reaction. N-terminal L-methionine is a prerequisite for activity but the enzyme has broad specificity at other positions. This Bacteroides thetaiotaomicron (strain ATCC 29148 / DSM 2079 / JCM 5827 / CCUG 10774 / NCTC 10582 / VPI-5482 / E50) protein is Peptide deformylase.